The primary structure comprises 922 residues: Metabotropic glutamate receptor 7 (922 aa).

A signal peptide spans M1–G34. Residues Q35 to W590 are Extracellular-facing. Residues C67 and C109 are joined by a disulfide bond. The N-linked (GlcNAc...) asparagine glycan is linked to N98. Residues S159, A180–T182, Y230, and D314 contribute to the L-glutamate site. 7 disulfide bridges follow: C249–C541, C374–C390, C430–C437, C523–C542, C527–C545, C548–C560, and C563–C576. K407 lines the L-glutamate pocket. N-linked (GlcNAc...) asparagine glycosylation is found at N458 and N486. An N-linked (GlcNAc...) asparagine glycan is attached at N572. Residues A591 to Y615 form a helical membrane-spanning segment. The Cytoplasmic segment spans residues N616–E627. The chain crosses the membrane as a helical span at residues L628 to A648. Over K649 to V654 the chain is Extracellular. Residues C655–T675 form a helical membrane-spanning segment. Residues K676 to Q702 lie on the Cytoplasmic side of the membrane. The helical transmembrane segment at L703–V723 threads the bilayer. Residues D724 to D753 lie on the Extracellular side of the membrane. A helical transmembrane segment spans residues L754–I775. Over K776 to K788 the chain is Cytoplasmic. Residues P789–G810 form a helical membrane-spanning segment. At T811–L825 the chain is on the extracellular side. The helical transmembrane segment at T826–F850 threads the bilayer. Residues H851–V922 are Cytoplasmic-facing.

This sequence belongs to the G-protein coupled receptor 3 family. In terms of assembly, homodimer. Interacts with PICK1.

The protein localises to the cell membrane. G-protein coupled receptor activated by glutamate that regulates axon outgrowth through the MAPK-cAMP-PKA signaling pathway during neuronal development. Ligand binding causes a conformation change that triggers signaling via guanine nucleotide-binding proteins (G proteins) and modulates the activity of downstream effectors, such as adenylate cyclase that it inhibits. In Pongo abelii (Sumatran orangutan), this protein is Metabotropic glutamate receptor 7 (GRM7).